The chain runs to 620 residues: MDSHTLLQALIYLGSAALIVPIAVRLGLGSVLGYLIAGCIIGPWGLRLVTDAESILHFAEIGVVLMLFVIGLELDPQRLWKLRASVFGGGALQMVVCGGLIGLFCMFLGLRWQVAELIGMTLALSSTAIAMQAMNERNLTVSQVGRSAFAVLLFQDIAAIPLVAMIPLLAASGASTTLGAFALSALKVAGALALVVLLGRYVTRPALRFVARSGLREVFSAVALFLVFGFGLLLEEVGLSMAMGAFLAGVLLASSEYRHALESDIEPFKGLLLGLFFIGVGMSIDFGTLVENPLRILLLLAGFLAIKIVMLWLVARPLGVPAKQRRWFAVLLGQGSKFAFVVFGAAQMADVLEPEWAKALTLAVALSMAATPIFLVLLTRMEKTATGEAREADEIDEEQPRVIVAGFGRFGQIAGRLLLSSGVKMVVLDHDPDHIETLRKFGMKVFYGDATRMDLLESAGAAKAEVLINAIDDPQTNLQLSELVKSHFPHLQIIARARDVDHYIRLRQAGVAMPERETFEGALKSGRQALEALGLGRYEARERADLFRHFNTRMVEEMAKGENDPLSRAAAYKRTSAMLSEIITEDREHLSLIQRHGWQGTAEGKHSGEAADEPEVKPSI.

12 helical membrane-spanning segments follow: residues 4–24, 26–46, 54–74, 90–110, 114–134, 149–169, 178–198, 218–238, 270–290, 294–314, 327–347, and 359–379; these read HTLL…PIAV, LGLG…PWGL, SILH…GLEL, GALQ…FLGL, VAEL…MQAM, FAVL…IPLL, LGAF…VVLL, VFSA…EEVG, GLLL…GTLV, LRIL…LWLV, WFAV…GAAQ, and ALTL…VLLT. An RCK N-terminal domain is found at 399 to 518; the sequence is QPRVIVAGFG…AGVAMPERET (120 aa). Residues 599–620 form a disordered region; sequence QGTAEGKHSGEAADEPEVKPSI.

The protein belongs to the monovalent cation:proton antiporter 2 (CPA2) transporter (TC 2.A.37) family. KefC subfamily. As to quaternary structure, homodimer. Interacts with the regulatory subunit KefF.

The protein localises to the cell inner membrane. Pore-forming subunit of a potassium efflux system that confers protection against electrophiles. Catalyzes K(+)/H(+) antiport. The protein is Glutathione-regulated potassium-efflux system protein KefC of Salmonella choleraesuis (strain SC-B67).